The primary structure comprises 362 residues: Phosphoserine aminotransferase (362 aa).

An L-glutamate-binding site is contributed by Arg43. Pyridoxal 5'-phosphate-binding positions include 77 to 78, Trp103, Thr153, Asp173, and Gln196; that span reads AT. An N6-(pyridoxal phosphate)lysine modification is found at Lys197. 238 to 239 provides a ligand contact to pyridoxal 5'-phosphate; it reads NT.

Belongs to the class-V pyridoxal-phosphate-dependent aminotransferase family. SerC subfamily. In terms of assembly, homodimer. Pyridoxal 5'-phosphate serves as cofactor.

The protein localises to the cytoplasm. The enzyme catalyses O-phospho-L-serine + 2-oxoglutarate = 3-phosphooxypyruvate + L-glutamate. The catalysed reaction is 4-(phosphooxy)-L-threonine + 2-oxoglutarate = (R)-3-hydroxy-2-oxo-4-phosphooxybutanoate + L-glutamate. Its pathway is amino-acid biosynthesis; L-serine biosynthesis; L-serine from 3-phospho-D-glycerate: step 2/3. The protein operates within cofactor biosynthesis; pyridoxine 5'-phosphate biosynthesis; pyridoxine 5'-phosphate from D-erythrose 4-phosphate: step 3/5. Functionally, catalyzes the reversible conversion of 3-phosphohydroxypyruvate to phosphoserine and of 3-hydroxy-2-oxo-4-phosphonooxybutanoate to phosphohydroxythreonine. This Xylella fastidiosa (strain 9a5c) protein is Phosphoserine aminotransferase.